A 329-amino-acid chain; its full sequence is tRNA N6-adenosine threonylcarbamoyltransferase (329 aa).

Fe cation is bound by residues His107 and His111. Residues 129 to 133 (LVSGG), Asp162, Gly175, and Asn268 each bind substrate. Fe cation is bound at residue Asp296.

The protein belongs to the KAE1 / TsaD family. Fe(2+) is required as a cofactor.

Its subcellular location is the cytoplasm. The enzyme catalyses L-threonylcarbamoyladenylate + adenosine(37) in tRNA = N(6)-L-threonylcarbamoyladenosine(37) in tRNA + AMP + H(+). Its function is as follows. Required for the formation of a threonylcarbamoyl group on adenosine at position 37 (t(6)A37) in tRNAs that read codons beginning with adenine. Is involved in the transfer of the threonylcarbamoyl moiety of threonylcarbamoyl-AMP (TC-AMP) to the N6 group of A37, together with TsaE and TsaB. TsaD likely plays a direct catalytic role in this reaction. This is tRNA N6-adenosine threonylcarbamoyltransferase from Nitratiruptor sp. (strain SB155-2).